The sequence spans 261 residues: Putative cytochrome YdhU (261 aa).

The chain crosses the membrane as a helical span at residues F25–G45. Position 77 (H77) interacts with heme b. The next 3 membrane-spanning stretches (helical) occupy residues A81–A101, V108–I128, and V182–C202. Residue H111 participates in heme b binding. Heme b contacts are provided by H223 and H237. Residues F224 to G244 form a helical membrane-spanning segment. Residue H237 participates in a menaquinone binding.

The protein belongs to the PhsC family. Requires heme as cofactor.

The protein resides in the cell inner membrane. The sequence is that of Putative cytochrome YdhU (ydhU) from Escherichia coli (strain K12).